Here is a 76-residue protein sequence, read N- to C-terminus: Acyl carrier protein (76 aa).

Residues 1-76 enclose the Carrier domain; it reads MSIEERVKKI…SAIDYVQNNQ (76 aa). Ser-36 is subject to O-(pantetheine 4'-phosphoryl)serine.

This sequence belongs to the acyl carrier protein (ACP) family. Post-translationally, 4'-phosphopantetheine is transferred from CoA to a specific serine of apo-ACP by AcpS. This modification is essential for activity because fatty acids are bound in thioester linkage to the sulfhydryl of the prosthetic group.

The protein localises to the cytoplasm. The protein operates within lipid metabolism; fatty acid biosynthesis. Functionally, carrier of the growing fatty acid chain in fatty acid biosynthesis. This Histophilus somni (strain 129Pt) (Haemophilus somnus) protein is Acyl carrier protein.